The sequence spans 316 residues: L-lactate dehydrogenase 3 (316 aa).

Residues Val16, Asp37, Arg42, and Tyr68 each coordinate NAD(+). Arg91 is a substrate binding site. Residues Ser104, 121-123, and Thr146 each bind NAD(+); that span reads ASN. Residue 123 to 126 coordinates substrate; the sequence is NPVD. Position 151–154 (151–154) interacts with substrate; it reads DSSR. Residues Arg156 and His171 each coordinate beta-D-fructose 1,6-bisphosphate. His178 (proton acceptor) is an active-site residue. Thr233 contributes to the substrate binding site.

This sequence belongs to the LDH/MDH superfamily. LDH family. In terms of assembly, homotetramer.

It localises to the cytoplasm. It carries out the reaction (S)-lactate + NAD(+) = pyruvate + NADH + H(+). It functions in the pathway fermentation; pyruvate fermentation to lactate; (S)-lactate from pyruvate: step 1/1. With respect to regulation, allosterically activated by fructose 1,6-bisphosphate (FBP). Catalyzes the conversion of lactate to pyruvate. This Bacillus anthracis protein is L-lactate dehydrogenase 3.